A 78-amino-acid polypeptide reads, in one-letter code: cAMP-dependent protein kinase inhibitor beta (78 aa).

Residues 1–10 (MRTDSSKMTD) are compositionally biased toward basic and acidic residues. The tract at residues 1 to 78 (MRTDSSKMTD…QLEKPQNEEK (78 aa)) is disordered. The segment covering 33-42 (IQSSAATDGT) has biased composition (polar residues). The span at 53 to 78 (SVKEDAKEKDEKTTQDQLEKPQNEEK) shows a compositional bias: basic and acidic residues.

The protein belongs to the PKI family.

Its function is as follows. Extremely potent competitive inhibitor of cAMP-dependent protein kinase activity, this protein interacts with the catalytic subunit of the enzyme after the cAMP-induced dissociation of its regulatory chains. This Homo sapiens (Human) protein is cAMP-dependent protein kinase inhibitor beta (PKIB).